The following is a 139-amino-acid chain: Maximins 4/H3 type 7 (139 aa).

The N-terminal stretch at 1-18 is a signal peptide; sequence MNFKYIVAVSFLIASAYA. Positions 19–43 are excised as a propeptide; it reads RSVQNDEQSLSQRDVLEEESLREIR. Asn70 carries the post-translational modification Asparagine amide. A propeptide spanning residues 74 to 118 is cleaved from the precursor; sequence TAEDHEVMKRLEAIMRDLDSLDYPEEASERETRGFNQDEIAKEKR. Ile138 is modified (isoleucine amide).

The protein belongs to the bombinin family. As to expression, expressed by the skin glands.

It is found in the secreted. Its function is as follows. Maximin-4 shows antibacterial activity against both Gram-positive and Gram-negative bacteria. It also shows antimicrobial activity against the fungus C.albicans, but not against A.flavus nor P.uticale. It has little hemolytic activity. It does not possess a significant cytotoxicity against tumor cell lines. It does not possess a significant anti-HIV activity. Functionally, maximin-H3 shows antibacterial activity against both Gram-positive and Gram-negative bacteria. It also shows antimicrobial activity against the fungus C.albicans. Shows strong hemolytic activity. The polypeptide is Maximins 4/H3 type 7 (Bombina maxima (Giant fire-bellied toad)).